A 110-amino-acid chain; its full sequence is Large ribosomal subunit protein uL22 (110 aa).

It belongs to the universal ribosomal protein uL22 family. Part of the 50S ribosomal subunit.

In terms of biological role, this protein binds specifically to 23S rRNA; its binding is stimulated by other ribosomal proteins, e.g. L4, L17, and L20. It is important during the early stages of 50S assembly. It makes multiple contacts with different domains of the 23S rRNA in the assembled 50S subunit and ribosome. The globular domain of the protein is located near the polypeptide exit tunnel on the outside of the subunit, while an extended beta-hairpin is found that lines the wall of the exit tunnel in the center of the 70S ribosome. This Exiguobacterium sp. (strain ATCC BAA-1283 / AT1b) protein is Large ribosomal subunit protein uL22.